A 214-amino-acid polypeptide reads, in one-letter code: Phosphatidylserine decarboxylase proenzyme (214 aa).

Catalysis depends on Ser183, which acts as the Schiff-base intermediate with substrate; via pyruvic acid. A Pyruvic acid (Ser); by autocatalysis modification is found at Ser183.

The protein belongs to the phosphatidylserine decarboxylase family. PSD-A subfamily. In terms of assembly, heterodimer of a large membrane-associated beta subunit and a small pyruvoyl-containing alpha subunit. The cofactor is pyruvate. Is synthesized initially as an inactive proenzyme. Formation of the active enzyme involves a self-maturation process in which the active site pyruvoyl group is generated from an internal serine residue via an autocatalytic post-translational modification. Two non-identical subunits are generated from the proenzyme in this reaction, and the pyruvate is formed at the N-terminus of the alpha chain, which is derived from the carboxyl end of the proenzyme. The post-translation cleavage follows an unusual pathway, termed non-hydrolytic serinolysis, in which the side chain hydroxyl group of the serine supplies its oxygen atom to form the C-terminus of the beta chain, while the remainder of the serine residue undergoes an oxidative deamination to produce ammonia and the pyruvoyl prosthetic group on the alpha chain.

The protein resides in the cell membrane. It carries out the reaction a 1,2-diacyl-sn-glycero-3-phospho-L-serine + H(+) = a 1,2-diacyl-sn-glycero-3-phosphoethanolamine + CO2. It participates in phospholipid metabolism; phosphatidylethanolamine biosynthesis; phosphatidylethanolamine from CDP-diacylglycerol: step 2/2. In terms of biological role, catalyzes the formation of phosphatidylethanolamine (PtdEtn) from phosphatidylserine (PtdSer). The polypeptide is Phosphatidylserine decarboxylase proenzyme (Syntrophotalea carbinolica (strain DSM 2380 / NBRC 103641 / GraBd1) (Pelobacter carbinolicus)).